Reading from the N-terminus, the 272-residue chain is Putative protein-disulfide oxidoreductase RP025 (272 aa).

An N-terminal signal peptide occupies residues 1-21 (MRNIFIVLIFLFLSNCSEVKA). In terms of domain architecture, Thioredoxin spans 74 to 263 (DSREQKKPEI…ISKAVDKALD (190 aa)). Residues Cys-116 and Cys-119 are joined by a disulfide bond.

Belongs to the thioredoxin family. DsbA subfamily.

The protein localises to the periplasm. Functionally, may be required for disulfide bond formation in some proteins. This is Putative protein-disulfide oxidoreductase RP025 from Rickettsia prowazekii (strain Madrid E).